Consider the following 365-residue polypeptide: Anhydro-N-acetylmuramic acid kinase (365 aa).

12–19 (GTSLDGID) is an ATP binding site.

Belongs to the anhydro-N-acetylmuramic acid kinase family.

It carries out the reaction 1,6-anhydro-N-acetyl-beta-muramate + ATP + H2O = N-acetyl-D-muramate 6-phosphate + ADP + H(+). Its pathway is amino-sugar metabolism; 1,6-anhydro-N-acetylmuramate degradation. It functions in the pathway cell wall biogenesis; peptidoglycan recycling. Functionally, catalyzes the specific phosphorylation of 1,6-anhydro-N-acetylmuramic acid (anhMurNAc) with the simultaneous cleavage of the 1,6-anhydro ring, generating MurNAc-6-P. Is required for the utilization of anhMurNAc either imported from the medium or derived from its own cell wall murein, and thus plays a role in cell wall recycling. In Rhizorhabdus wittichii (strain DSM 6014 / CCUG 31198 / JCM 15750 / NBRC 105917 / EY 4224 / RW1) (Sphingomonas wittichii), this protein is Anhydro-N-acetylmuramic acid kinase.